The following is a 369-amino-acid chain: Methylthioribose-1-phosphate isomerase (369 aa).

An N-acetylmethionine modification is found at M1. Residue R158 is modified to Omega-N-methylarginine. D248 acts as the Proton donor in catalysis. The residue at position 366 (S366) is a Phosphoserine.

It belongs to the eIF-2B alpha/beta/delta subunits family. MtnA subfamily.

The protein resides in the cytoplasm. It is found in the nucleus. It carries out the reaction 5-(methylsulfanyl)-alpha-D-ribose 1-phosphate = 5-(methylsulfanyl)-D-ribulose 1-phosphate. The protein operates within amino-acid biosynthesis; L-methionine biosynthesis via salvage pathway; L-methionine from S-methyl-5-thio-alpha-D-ribose 1-phosphate: step 1/6. Catalyzes the interconversion of methylthioribose-1-phosphate (MTR-1-P) into methylthioribulose-1-phosphate (MTRu-1-P). The sequence is that of Methylthioribose-1-phosphate isomerase (Mri1) from Mus musculus (Mouse).